Reading from the N-terminus, the 298-residue chain is MARRGLLISFFAIFSVLLQSSTSLISSSSVFVNPSKVKQVSSKPRAFVYEGFLTELECDHMVSLAKASLKRSAVADNDSGESKFSEVRTSSGTFISKGKDPIVSGIEDKISTWTFLPKENGEDIQVLRYEHGQKYDAHFDYFHDKVNIVRGGHRMATILMYLSNVTKGGETVFPDAEIPSRRVLSENKEDLSDCAKRGIAVKPRKGDALLFFNLHPDAIPDPLSLHGGCPVIEGEKWSATKWIHVDSFDRIVTPSGNCTDMNESCERWAVLGECTKNPEYMVGTTELPGYCRRSCKAC.

Topologically, residues 1–6 (MARRGL) are cytoplasmic. A helical; Signal-anchor for type II membrane protein membrane pass occupies residues 7 to 25 (LISFFAIFSVLLQSSTSLI). Topologically, residues 26–298 (SSSSVFVNPS…GYCRRSCKAC (273 aa)) are lumenal. Asn77 is a glycosylation site (N-linked (GlcNAc...) asparagine). Residues 120–245 (NGEDIQVLRY…KWSATKWIHV (126 aa)) form the Fe2OG dioxygenase domain. Positions 138 and 140 each coordinate Fe cation. An N-linked (GlcNAc...) asparagine glycan is attached at Asn164. Fe cation is bound at residue His226. A 2-oxoglutarate-binding site is contributed by Lys236. 2 N-linked (GlcNAc...) asparagine glycosylation sites follow: Asn257 and Asn262. One can recognise a ShKT domain in the interval 258 to 298 (CTDMNESCERWAVLGECTKNPEYMVGTTELPGYCRRSCKAC). 3 cysteine pairs are disulfide-bonded: Cys258–Cys298, Cys265–Cys291, and Cys274–Cys295.

It belongs to the P4HA family. Requires Fe(2+) as cofactor. It depends on L-ascorbate as a cofactor.

Its subcellular location is the endoplasmic reticulum membrane. It catalyses the reaction L-prolyl-[collagen] + 2-oxoglutarate + O2 = trans-4-hydroxy-L-prolyl-[collagen] + succinate + CO2. Catalyzes the post-translational formation of 4-hydroxyproline in -Xaa-Pro-Gly- sequences in proline-rich peptide sequences of plant glycoproteins and other proteins. Hydroxyprolines are important constituent of many plant cell wall glycoproteins such as extensins, hydroxyproline-rich glycoproteins, lectins and arabinogalactan proteins. The polypeptide is Probable prolyl 4-hydroxylase 4 (Arabidopsis thaliana (Mouse-ear cress)).